The following is a 61-amino-acid chain: Small ribosomal subunit protein uS14 (61 aa).

Residues 1–14 (MAKTSQKVRNHRPA) show a composition bias toward basic residues. Residues 1 to 20 (MAKTSQKVRNHRPAKFSSRE) form a disordered region. Cys-24, Cys-27, Cys-40, and Cys-43 together coordinate Zn(2+).

Belongs to the universal ribosomal protein uS14 family. Zinc-binding uS14 subfamily. As to quaternary structure, part of the 30S ribosomal subunit. Contacts proteins S3 and S10. The cofactor is Zn(2+).

Functionally, binds 16S rRNA, required for the assembly of 30S particles and may also be responsible for determining the conformation of the 16S rRNA at the A site. In Lactobacillus delbrueckii subsp. bulgaricus (strain ATCC 11842 / DSM 20081 / BCRC 10696 / JCM 1002 / NBRC 13953 / NCIMB 11778 / NCTC 12712 / WDCM 00102 / Lb 14), this protein is Small ribosomal subunit protein uS14.